Here is a 271-residue protein sequence, read N- to C-terminus: Tryptophan synthase alpha chain (271 aa).

Residues Glu-49 and Asp-60 each act as proton acceptor in the active site.

Belongs to the TrpA family. In terms of assembly, tetramer of two alpha and two beta chains.

It carries out the reaction (1S,2R)-1-C-(indol-3-yl)glycerol 3-phosphate + L-serine = D-glyceraldehyde 3-phosphate + L-tryptophan + H2O. Its pathway is amino-acid biosynthesis; L-tryptophan biosynthesis; L-tryptophan from chorismate: step 5/5. Its function is as follows. The alpha subunit is responsible for the aldol cleavage of indoleglycerol phosphate to indole and glyceraldehyde 3-phosphate. This Blochmanniella floridana protein is Tryptophan synthase alpha chain.